Here is a 143-residue protein sequence, read N- to C-terminus: Transcriptional regulator MraZ (143 aa).

2 SpoVT-AbrB domains span residues 5–47 (EYFH…PVSA) and 76–119 (ASNQ…DKEK).

It belongs to the MraZ family. Forms oligomers.

It localises to the cytoplasm. Its subcellular location is the nucleoid. The polypeptide is Transcriptional regulator MraZ (Finegoldia magna (strain ATCC 29328 / DSM 20472 / WAL 2508) (Peptostreptococcus magnus)).